Consider the following 211-residue polypeptide: Potassium-transporting ATPase KdpC subunit (211 aa).

A helical membrane pass occupies residues 13 to 35; that stretch reads VVTMVLTGLLYPLAVTGLAQLLF.

It belongs to the KdpC family. As to quaternary structure, the system is composed of three essential subunits: KdpA, KdpB and KdpC.

It localises to the cell inner membrane. Its function is as follows. Part of the high-affinity ATP-driven potassium transport (or Kdp) system, which catalyzes the hydrolysis of ATP coupled with the electrogenic transport of potassium into the cytoplasm. This subunit acts as a catalytic chaperone that increases the ATP-binding affinity of the ATP-hydrolyzing subunit KdpB by the formation of a transient KdpB/KdpC/ATP ternary complex. The polypeptide is Potassium-transporting ATPase KdpC subunit (Myxococcus xanthus (strain DK1622)).